We begin with the raw amino-acid sequence, 211 residues long: Thymidylate kinase (211 aa).

An ATP-binding site is contributed by 7–14 (GMDGSGKT).

Belongs to the thymidylate kinase family.

It carries out the reaction dTMP + ATP = dTDP + ADP. In terms of biological role, phosphorylation of dTMP to form dTDP in both de novo and salvage pathways of dTTP synthesis. This is Thymidylate kinase from Mesoplasma florum (strain ATCC 33453 / NBRC 100688 / NCTC 11704 / L1) (Acholeplasma florum).